Reading from the N-terminus, the 163-residue chain is NADH-quinone oxidoreductase subunit I (163 aa).

2 4Fe-4S ferredoxin-type domains span residues 53-83 (LRRY…IEAG) and 94-123 (VRYD…EGPN). Positions 63, 66, 69, 73, 103, 106, 109, and 113 each coordinate [4Fe-4S] cluster.

The protein belongs to the complex I 23 kDa subunit family. In terms of assembly, NDH-1 is composed of 14 different subunits. Subunits NuoA, H, J, K, L, M, N constitute the membrane sector of the complex. The cofactor is [4Fe-4S] cluster.

The protein resides in the cell inner membrane. The enzyme catalyses a quinone + NADH + 5 H(+)(in) = a quinol + NAD(+) + 4 H(+)(out). Functionally, NDH-1 shuttles electrons from NADH, via FMN and iron-sulfur (Fe-S) centers, to quinones in the respiratory chain. The immediate electron acceptor for the enzyme in this species is believed to be ubiquinone. Couples the redox reaction to proton translocation (for every two electrons transferred, four hydrogen ions are translocated across the cytoplasmic membrane), and thus conserves the redox energy in a proton gradient. This is NADH-quinone oxidoreductase subunit I from Bartonella tribocorum (strain CIP 105476 / IBS 506).